Here is a 342-residue protein sequence, read N- to C-terminus: MLTNPSQVIIRNQETLSQHKVLVLNHEADLLPKALLDVASSVDALALDYHHYLHLAPQANNKLRCYFGHQLPHQNKYNTVIVYFPKAKPLAPYLFNLAAQHLVPNGQLLVVGENKGGIKSLVKLLPNYFAAGVKLDNARHSLLFGSSLIDTAPEITLSDWASQYQLSTPQGNITICNLVGVFSEKHLDQGTELLLSHLPTLSGRVLDFGCGAGVIAATLLKAQPTLSLECIDINAMALASCELTLAANGMMAKVYPSDGLAQTSGKFDGIISNPPFHDGLASTTNIAQRFVADSAKQLQSKGIWQIVANRHLPYSDTIAAEFGQLTVPAENNKYKLYYFQQS.

This sequence belongs to the methyltransferase superfamily. RsmC family. Monomer.

The protein localises to the cytoplasm. The enzyme catalyses guanosine(1207) in 16S rRNA + S-adenosyl-L-methionine = N(2)-methylguanosine(1207) in 16S rRNA + S-adenosyl-L-homocysteine + H(+). In terms of biological role, specifically methylates the guanine in position 1207 of 16S rRNA in the 30S particle. This is Ribosomal RNA small subunit methyltransferase C from Shewanella oneidensis (strain ATCC 700550 / JCM 31522 / CIP 106686 / LMG 19005 / NCIMB 14063 / MR-1).